Here is a 396-residue protein sequence, read N- to C-terminus: Elongation factor Tu (396 aa).

In terms of domain architecture, tr-type G spans 10–205 (KPHVNIGTIG…ACDDSIPDPE (196 aa)). A G1 region spans residues 19–26 (GHVDHGKT). 19–26 (GHVDHGKT) lines the GTP pocket. Residue Thr-26 coordinates Mg(2+). A G2 region spans residues 62 to 66 (GITIN). The tract at residues 83-86 (DAPG) is G3. Residues 83–87 (DAPGH) and 138–141 (NKCD) contribute to the GTP site. Positions 138–141 (NKCD) are G4. The segment at 175–177 (SAL) is G5.

The protein belongs to the TRAFAC class translation factor GTPase superfamily. Classic translation factor GTPase family. EF-Tu/EF-1A subfamily. As to quaternary structure, monomer.

The protein localises to the cytoplasm. It carries out the reaction GTP + H2O = GDP + phosphate + H(+). Functionally, GTP hydrolase that promotes the GTP-dependent binding of aminoacyl-tRNA to the A-site of ribosomes during protein biosynthesis. The chain is Elongation factor Tu from Corynebacterium aurimucosum (strain ATCC 700975 / DSM 44827 / CIP 107346 / CN-1) (Corynebacterium nigricans).